The primary structure comprises 757 residues: Inhibitor of nuclear factor kappa-B kinase subunit beta (757 aa).

A Protein kinase domain is found at 15 to 300; it reads WEMKERLGTG…DPQYGPNGCF (286 aa). Residues 21 to 29 and Lys-44 contribute to the ATP site; that span reads LGTGGFGNV. Asp-145 serves as the catalytic Proton acceptor. A Glycyl lysine isopeptide (Lys-Gly) (interchain with G-Cter in ubiquitin) cross-link involves residue Lys-163. Residue Ser-177 is modified to Phosphoserine; by TBK1 and PKC/PRKCZ. Position 179 is an S-nitrosocysteine (Cys-179). Ser-181 carries the post-translational modification Phosphoserine; by TBK1, PKC/PRKCZ and PDPK1. Position 191 is a hydroxyproline (Pro-191). The interval 458–479 is leucine-zipper; it reads LLRNNSCLSKMKNAMASTAQQL. Ser-670 is subject to Phosphoserine; by autocatalysis. A Phosphoserine modification is found at Ser-672. Phosphoserine; by autocatalysis is present on residues Ser-675, Ser-682, Ser-689, Ser-692, Ser-697, Ser-705, Ser-733, and Ser-740. The disordered stretch occupies residues 682–703; that stretch reads SHPGHLMSQPSSACDSLPDSDK. The tract at residues 737-742 is NEMO-binding; it reads LDWSWL.

It belongs to the protein kinase superfamily. Ser/Thr protein kinase family. I-kappa-B kinase subfamily. In terms of assembly, component of the I-kappa-B-kinase (IKK) core complex consisting of CHUK, IKBKB and IKBKG; probably four alpha/CHUK-beta/IKBKB dimers are associated with four gamma/IKBKG subunits. The IKK core complex seems to associate with regulatory or adapter proteins to form a IKK-signalosome holo-complex. The IKK complex associates with TERF2IP/RAP1, leading to promote IKK-mediated phosphorylation of RELA/p65. Part of a complex composed of NCOA2, NCOA3, CHUK/IKKA, IKBKB, IKBKG and CREBBP. Part of a 70-90 kDa complex at least consisting of CHUK/IKKA, IKBKB, NFKBIA, RELA, ELP1 and MAP3K14. Found in a membrane raft complex, at least composed of BCL10, CARD11, DPP4 and IKBKB. Interacts with SQSTM1 through PRKCZ or PRKCI. Forms an NGF-induced complex with IKBKB, PRKCI and TRAF6. May interact with MAVS/IPS1. Interacts with NALP2. Interacts with TICAM1. Interacts with FAF1; the interaction disrupts the IKK complex formation. Interacts with ATM. Part of a ternary complex consisting of TANK, IKBKB and IKBKG. Interacts with NIBP; the interaction is direct. Interacts with ARRB1 and ARRB2. Interacts with TRIM21. Interacts with NLRC5; prevents IKBKB phosphorylation and kinase activity. Interacts with PDPK1. Interacts with EIF2AK2/PKR. The phosphorylated form interacts with PPM1A and PPM1B. Interacts with ZNF268 isoform 2; the interaction is further increased in a TNF-alpha-dependent manner. Interacts with IKBKE. Interacts with ZC3H12A. Interacts with AKAP13. Interacts with LRRC14; disrupts IKBKB-IKBKG interaction preventing I-kappa-B-kinase (IKK) core complex formation and leading to a decrease of IKBKB phosphorylation and NF-kappaB activation. Interacts with SASH1. Interacts with ARFIP2. Interacts with FKBP5. Upon cytokine stimulation, phosphorylated on Ser-177 and Ser-181 by MEKK1 and/or MAP3K14/NIK as well as TBK1 and PRKCZ; which enhances activity. Phosphorylated by MAP3K7/TAK1 in response to NOD1 and NOD2 signaling, promoting activation and phosphorylation of NF-kappa-B inhibitors, leading to NF-kappa-B activation. Once activated, autophosphorylates on the C-terminal serine cluster; which decreases activity and prevents prolonged activation of the inflammatory response. Phosphorylated by the IKK-related kinases TBK1 and IKBKE, which is associated with reduced CHUK/IKKA and IKBKB activity and NF-kappa-B-dependent gene transcription. Dephosphorylated at Ser-177 and Ser-181 by PPM1A and PPM1B. Post-translationally, ubiquitinated. Monoubiquitination involves TRIM21 that leads to inhibition of Tax-induced NF-kappa-B signaling. 'Ser-163' may not serve as a monoubiquitination site. Ubiquitination on 'Ser-163' may modulate phosphorylation on C-terminal serine residues. In terms of processing, hydroxylated by PHD1/EGLN2, loss of hydroxylation under hypoxic conditions results in activation of NF-kappa-B.

The protein resides in the cytoplasm. It is found in the nucleus. It localises to the membrane raft. The catalysed reaction is L-seryl-[I-kappa-B protein] + ATP = O-phospho-L-seryl-[I-kappa-B protein] + ADP + H(+). The enzyme catalyses L-seryl-[protein] + ATP = O-phospho-L-seryl-[protein] + ADP + H(+). It carries out the reaction L-threonyl-[protein] + ATP = O-phospho-L-threonyl-[protein] + ADP + H(+). Serine kinase that plays an essential role in the NF-kappa-B signaling pathway which is activated by multiple stimuli such as inflammatory cytokines, bacterial or viral products, DNA damages or other cellular stresses. Acts as a part of the canonical IKK complex in the conventional pathway of NF-kappa-B activation. Phosphorylates inhibitors of NF-kappa-B on 2 critical serine residues. These modifications allow polyubiquitination of the inhibitors and subsequent degradation by the proteasome. In turn, free NF-kappa-B is translocated into the nucleus and activates the transcription of hundreds of genes involved in immune response, growth control, or protection against apoptosis. In addition to the NF-kappa-B inhibitors, phosphorylates several other components of the signaling pathway including NEMO/IKBKG, NF-kappa-B subunits RELA and NFKB1, as well as IKK-related kinases TBK1 and IKBKE. IKK-related kinase phosphorylations may prevent the overproduction of inflammatory mediators since they exert a negative regulation on canonical IKKs. Phosphorylates FOXO3, mediating the TNF-dependent inactivation of this pro-apoptotic transcription factor. Also phosphorylates other substrates including NAA10, NCOA3, BCL10 and IRS1. Phosphorylates RIPK1 at 'Ser-25' which represses its kinase activity and consequently prevents TNF-mediated RIPK1-dependent cell death. Phosphorylates the C-terminus of IRF5, stimulating IRF5 homodimerization and translocation into the nucleus. This Rattus norvegicus (Rat) protein is Inhibitor of nuclear factor kappa-B kinase subunit beta (Ikbkb).